Reading from the N-terminus, the 208-residue chain is N-(5'-phosphoribosyl)anthranilate isomerase (208 aa).

This sequence belongs to the TrpF family.

It carries out the reaction N-(5-phospho-beta-D-ribosyl)anthranilate = 1-(2-carboxyphenylamino)-1-deoxy-D-ribulose 5-phosphate. It functions in the pathway amino-acid biosynthesis; L-tryptophan biosynthesis; L-tryptophan from chorismate: step 3/5. The polypeptide is N-(5'-phosphoribosyl)anthranilate isomerase (Natronomonas pharaonis (strain ATCC 35678 / DSM 2160 / CIP 103997 / JCM 8858 / NBRC 14720 / NCIMB 2260 / Gabara) (Halobacterium pharaonis)).